The chain runs to 226 residues: MSRGGGSYGEVGQKIDYVFKVVLIGDSAVGKSQLLARFARNEFNLDSKATIGVEFQTRTLHIDARTVKAQIWDTAGQERYRAVTSAYYRGAVGAMLVYDITKRQSFDHVARWLEELRGHADKNIVIMLIGNKSDLGTLRVVPTEDAKEFAERENLFFMETSALESTNVENAFMTVLTEIYRIVSKKNLVANEEVDSSGNSSLLKGTKIVVPGQEPAPPTKASCCMS.

25-32 (GDSAVGKS) is a binding site for GTP. The Effector region signature appears at 47 to 55 (SKATIGVEF). GTP contacts are provided by residues 73-77 (DTAGQ) and 131-134 (NKSD). Residues C223 and C224 are each lipidated (S-geranylgeranyl cysteine).

This sequence belongs to the small GTPase superfamily. Rab family.

Its subcellular location is the cell membrane. May play an important role in plant growth and development. The sequence is that of Ras-related protein RGP1 (RGP1) from Oryza sativa subsp. japonica (Rice).